Consider the following 256-residue polypeptide: 5-oxoprolinase subunit A 1 (256 aa).

Belongs to the LamB/PxpA family. In terms of assembly, forms a complex composed of PxpA, PxpB and PxpC.

It carries out the reaction 5-oxo-L-proline + ATP + 2 H2O = L-glutamate + ADP + phosphate + H(+). Its function is as follows. Catalyzes the cleavage of 5-oxoproline to form L-glutamate coupled to the hydrolysis of ATP to ADP and inorganic phosphate. The polypeptide is 5-oxoprolinase subunit A 1 (Pseudomonas syringae pv. tomato (strain ATCC BAA-871 / DC3000)).